The following is a 271-amino-acid chain: ATP-dependent Clp protease proteolytic subunit 6, chloroplastic (271 aa).

Residues 1–30 (MAGLAISPPLGLSFSSRTRNPKPTSFLSHN) form a disordered region. The transit peptide at 1–77 (MAGLAISPPL…KAPRFGVIEA (77 aa)) directs the protein to the chloroplast. The segment covering 13–30 (SFSSRTRNPKPTSFLSHN) has biased composition (polar residues). Residue Ser175 is the Nucleophile of the active site. His200 is a catalytic residue.

This sequence belongs to the peptidase S14 family. As to quaternary structure, component of the chloroplastic Clp protease core complex which consist of at least 16 proteins: CLPP4 (3 copies), CLPP5 (3 copies), CLPR4 (2 copies), ClpP1 (1 copy), CLPP6 (1 copy), CLPR2 (1 copy), CLPT1 (1 copy), CLPT2 (1 copy) and 3 copies of CLPP3 and/or CLPR1 and/or CLPR3. The core complex is organized in two heptameric rings, one containing CLPP3,4,5,6 in a 1:2:3:1 ratio and the other CLPP1 and CLPR1,2,3,4 in a 3:1:1:1:1 ratio. As to expression, mostly expressed in leaves. Also detected in stems, and to a lower extent, in roots (at protein level).

It localises to the plastid. The protein resides in the chloroplast stroma. The enzyme catalyses Hydrolysis of proteins to small peptides in the presence of ATP and magnesium. alpha-casein is the usual test substrate. In the absence of ATP, only oligopeptides shorter than five residues are hydrolyzed (such as succinyl-Leu-Tyr-|-NHMec, and Leu-Tyr-Leu-|-Tyr-Trp, in which cleavage of the -Tyr-|-Leu- and -Tyr-|-Trp bonds also occurs).. Its function is as follows. Cleaves peptides in various proteins in a process that requires ATP hydrolysis. Has a chymotrypsin-like activity. Plays a major role in the degradation of misfolded proteins. Essential protein required for chloroplast development and integrity. This is ATP-dependent Clp protease proteolytic subunit 6, chloroplastic from Arabidopsis thaliana (Mouse-ear cress).